Here is a 344-residue protein sequence, read N- to C-terminus: NADH-ubiquinone oxidoreductase chain 1 (344 aa).

The next 10 helical transmembrane spans lie at F18–I38, P58–L78, I89–I109, I123–G143, A159–C179, I195–E215, A228–L248, N253–F273, I281–V301, and L316–L336.

Belongs to the complex I subunit 1 family.

It localises to the mitochondrion inner membrane. The enzyme catalyses a ubiquinone + NADH + 5 H(+)(in) = a ubiquinol + NAD(+) + 4 H(+)(out). Core subunit of the mitochondrial membrane respiratory chain NADH dehydrogenase (Complex I) that is believed to belong to the minimal assembly required for catalysis. Complex I functions in the transfer of electrons from NADH to the respiratory chain. The immediate electron acceptor for the enzyme is believed to be ubiquinone. In Cyanidium caldarium (Red alga), this protein is NADH-ubiquinone oxidoreductase chain 1 (ND1).